A 230-amino-acid polypeptide reads, in one-letter code: RING finger protein 141 (230 aa).

G2 is lipidated: N-myristoyl glycine. The RING-type zinc finger occupies 155-192 (CCICMDGRADLILPCAHSFCQKCIDKWSDRHRNCPICR).

It is found in the membrane. In terms of biological role, may be involved in spermatogenesis. In Bos taurus (Bovine), this protein is RING finger protein 141 (RNF141).